The primary structure comprises 281 residues: Non-selective voltage-gated ion channel 2 (281 aa).

The ATP site is built by arginine 11 and arginine 19.

It belongs to the eukaryotic mitochondrial porin family.

It is found in the mitochondrion outer membrane. Non-selective voltage-gated ion channel that mediates the transport of anions and cations through the mitochondrion outer membrane. The channel adopts an open conformation at low or zero membrane potential and a closed conformation at potentials above 30-40 mV. The open state has a weak anion selectivity whereas the closed state is cation-selective. Does not confer permeability to NADH. Functionally, catalyzes the scrambling of phospholipids across the outer mitochondrial membrane; the mechanism is unrelated to channel activity and is capable of translocating both anionic and zwitterionic phospholipids. This Saccharomyces cerevisiae (strain ATCC 204508 / S288c) (Baker's yeast) protein is Non-selective voltage-gated ion channel 2 (POR2).